A 77-amino-acid chain; its full sequence is Cytoplasmic envelopment protein 3 (77 aa).

The N-myristoyl glycine; by host moiety is linked to residue Gly2.

This sequence belongs to the herpesviridae cytoplasmic envelopment protein 3 family. As to quaternary structure, interacts with cytoplasmic envelopment protein 2; this interaction is essential for the proper localization of each protein to the assembly complex and thus for the production of infectious virus. In terms of processing, myristoylation and palmitoylation (probably on one or more of the nearby cysteines at the N-terminus) enable membrane-binding and Golgi apparatus-specific targeting and are essential for efficient packaging. Post-translationally, phosphorylated. Phosphorylation does not seem to be required for recycling to the host Golgi apparatus. Packaging is selective for underphosphorylated forms.

It localises to the virion tegument. The protein localises to the virion membrane. It is found in the host cell membrane. The protein resides in the host Golgi apparatus membrane. Functionally, plays an important role in the cytoplasmic envelopment of tegument proteins and capsids during the assembly and egress processes. Also participates in viral entry at the fusion step probably by regulating the core fusion machinery. The sequence is that of Cytoplasmic envelopment protein 3 (U71) from Human herpesvirus 6A (strain Uganda-1102) (HHV-6 variant A).